Here is a 33-residue protein sequence, read N- to C-terminus: Photosystem II reaction center protein Psb30 (33 aa).

Residues 5–25 form a helical membrane-spanning segment; sequence ILAQLTALAFIVVSGPLVIAL.

Belongs to the Psb30/Ycf12 family. As to quaternary structure, PSII is composed of 1 copy each of membrane proteins PsbA, PsbB, PsbC, PsbD, PsbE, PsbF, PsbH, PsbI, PsbJ, PsbK, PsbL, PsbM, PsbT, PsbX, PsbY, PsbZ, Psb30/Ycf12, peripheral proteins of the oxygen-evolving complex and a large number of cofactors. It forms dimeric complexes.

It is found in the plastid. The protein localises to the chloroplast thylakoid membrane. Its function is as follows. A core subunit of photosystem II (PSII), probably helps stabilize the reaction center. The sequence is that of Photosystem II reaction center protein Psb30 from Chaetosphaeridium globosum (Charophycean green alga).